A 431-amino-acid chain; its full sequence is MSVIQDLQSRGLIAQTTDIEALDALLNEQKISLYCGFDPTADSLHIGHLLPVLALRRFQQAGHTPIALVGGATGMIGDPSFKAAERSLNSAETVAGWVESIRSQLTPFLSFEGGNAAIMANNADWFGKMNCLDFLRDIGKHFSVNAMLNKESVKQRIDRDGAGISFTEFAYSLLQGYDFAELNKRHGAVLEIGGSDQWGNITAGIDLTRRLYQKQVFGLTLPLVTKSDGTKFGKTEGGAVWLNAKKTSPYQFYQFWLKVADADVYKFLKYFTFLSIEEIDAIEAKDKASGSKPEAQRILAEEMTRLIHGEEALAAAQRISESLFAEDQSSLTESDFEQLALDGLPAFEVSDGINVVEALVKTGLASSNKEARGFVNSKAVLLNGKPAEANNPNHAAERPDDACLLNGEHKRFGKYTILRRGKRNHALLVWK.

Residue tyrosine 34 participates in L-tyrosine binding. Residues 39 to 48 (PTADSLHIGH) carry the 'HIGH' region motif. L-tyrosine contacts are provided by tyrosine 171 and glutamine 175. The 'KMSKS' region signature appears at 231–235 (KFGKT). Residue lysine 234 participates in ATP binding. The region spanning 353-422 (INVVEALVKT…GKYTILRRGK (70 aa)) is the S4 RNA-binding domain.

It belongs to the class-I aminoacyl-tRNA synthetase family. TyrS type 1 subfamily. In terms of assembly, homodimer.

The protein localises to the cytoplasm. It catalyses the reaction tRNA(Tyr) + L-tyrosine + ATP = L-tyrosyl-tRNA(Tyr) + AMP + diphosphate + H(+). Its function is as follows. Catalyzes the attachment of tyrosine to tRNA(Tyr) in a two-step reaction: tyrosine is first activated by ATP to form Tyr-AMP and then transferred to the acceptor end of tRNA(Tyr). This is Tyrosine--tRNA ligase from Neisseria meningitidis serogroup C / serotype 2a (strain ATCC 700532 / DSM 15464 / FAM18).